The following is an 88-amino-acid chain: Putative membrane protein insertion efficiency factor (88 aa).

A disordered region spans residues 65-88; the sequence is LDFVPPKKDKNDDSGHTCKAHHHH. The segment covering 69–80 has biased composition (basic and acidic residues); it reads PPKKDKNDDSGH.

It belongs to the UPF0161 family.

Its subcellular location is the cell membrane. Functionally, could be involved in insertion of integral membrane proteins into the membrane. The protein is Putative membrane protein insertion efficiency factor of Listeria innocua serovar 6a (strain ATCC BAA-680 / CLIP 11262).